The sequence spans 468 residues: ATP synthase subunit beta (468 aa).

148-155 (GGAGVGKT) is a binding site for ATP.

It belongs to the ATPase alpha/beta chains family. F-type ATPases have 2 components, CF(1) - the catalytic core - and CF(0) - the membrane proton channel. CF(1) has five subunits: alpha(3), beta(3), gamma(1), delta(1), epsilon(1). CF(0) has three main subunits: a(1), b(2) and c(9-12). The alpha and beta chains form an alternating ring which encloses part of the gamma chain. CF(1) is attached to CF(0) by a central stalk formed by the gamma and epsilon chains, while a peripheral stalk is formed by the delta and b chains.

It localises to the cell inner membrane. It catalyses the reaction ATP + H2O + 4 H(+)(in) = ADP + phosphate + 5 H(+)(out). Produces ATP from ADP in the presence of a proton gradient across the membrane. The catalytic sites are hosted primarily by the beta subunits. In Xanthomonas axonopodis pv. citri (strain 306), this protein is ATP synthase subunit beta.